We begin with the raw amino-acid sequence, 464 residues long: tRNA modification GTPase MnmE (464 aa).

Residues Arg-29, Glu-91, and Arg-131 each coordinate (6S)-5-formyl-5,6,7,8-tetrahydrofolate. The 162-residue stretch at 226-387 (GLKVALAGKP…LINYLLKKCG (162 aa)) folds into the TrmE-type G domain. K(+) is bound at residue Asn-236. GTP is bound by residues 236-241 (NVGKSS), 255-261 (TDLPGTT), and 280-283 (DTAG). Mg(2+) is bound at residue Ser-240. Residues Thr-255, Leu-257, and Thr-260 each coordinate K(+). Thr-261 contributes to the Mg(2+) binding site. A (6S)-5-formyl-5,6,7,8-tetrahydrofolate-binding site is contributed by Lys-464.

This sequence belongs to the TRAFAC class TrmE-Era-EngA-EngB-Septin-like GTPase superfamily. TrmE GTPase family. As to quaternary structure, homodimer. Heterotetramer of two MnmE and two MnmG subunits. The cofactor is K(+).

It localises to the cytoplasm. Its function is as follows. Exhibits a very high intrinsic GTPase hydrolysis rate. Involved in the addition of a carboxymethylaminomethyl (cmnm) group at the wobble position (U34) of certain tRNAs, forming tRNA-cmnm(5)s(2)U34. The chain is tRNA modification GTPase MnmE from Prochlorococcus marinus (strain NATL1A).